Here is a 1065-residue protein sequence, read N- to C-terminus: Probable arabinosyltransferase B (1065 aa).

Transmembrane regions (helical) follow at residues 15–37, 204–226, 241–263, 394–413, 417–436, 441–463, 510–527, 540–557, 567–589, 596–618, 633–655, and 667–689; these read WVAT…LPVV, LKLA…LWRL, NWRT…HVIG, YSRL…TLGV, GLIA…RILV, VVGT…TVVF, FGFL…FIML, AWRL…LMFT, LFAA…AVLG, AFLA…WWYV, GGIT…AIWL, and LARA…VFIA.

This sequence belongs to the emb family.

The protein resides in the cell membrane. Functionally, arabinosyl transferase responsible for the polymerization of arabinose into the arabinan of arabinogalactan. The polypeptide is Probable arabinosyltransferase B (embB) (Mycobacterium avium).